The chain runs to 326 residues: Beta-ketoacyl-[acyl-carrier-protein] synthase III (326 aa).

Active-site residues include C111 and H252. The ACP-binding stretch occupies residues 253–257 (QANIR). N282 is an active-site residue.

The protein belongs to the thiolase-like superfamily. FabH family. As to quaternary structure, homodimer.

It localises to the plastid. It is found in the chloroplast. It catalyses the reaction malonyl-[ACP] + acetyl-CoA + H(+) = 3-oxobutanoyl-[ACP] + CO2 + CoA. The protein operates within lipid metabolism; fatty acid biosynthesis. In terms of biological role, catalyzes the condensation reaction of fatty acid synthesis by the addition to an acyl acceptor of two carbons from malonyl-ACP. Catalyzes the first condensation reaction which initiates fatty acid synthesis and may therefore play a role in governing the total rate of fatty acid production. Possesses both acetoacetyl-ACP synthase and acetyl transacylase activities. Its substrate specificity determines the biosynthesis of branched-chain and/or straight-chain of fatty acids. The chain is Beta-ketoacyl-[acyl-carrier-protein] synthase III from Porphyra umbilicalis (Purple laver).